Reading from the N-terminus, the 377-residue chain is Nitric oxide reductase FlRd-NAD(+) reductase (377 aa).

Belongs to the FAD-dependent oxidoreductase family. FAD is required as a cofactor.

The protein resides in the cytoplasm. It catalyses the reaction 2 reduced [nitric oxide reductase rubredoxin domain] + NAD(+) + H(+) = 2 oxidized [nitric oxide reductase rubredoxin domain] + NADH. It participates in nitrogen metabolism; nitric oxide reduction. In terms of biological role, one of at least two accessory proteins for anaerobic nitric oxide (NO) reductase. Reduces the rubredoxin moiety of NO reductase. This is Nitric oxide reductase FlRd-NAD(+) reductase from Escherichia coli O45:K1 (strain S88 / ExPEC).